Reading from the N-terminus, the 508-residue chain is Maturase K (508 aa).

This sequence belongs to the intron maturase 2 family. MatK subfamily.

It is found in the plastid. It localises to the chloroplast. Functionally, usually encoded in the trnK tRNA gene intron. Probably assists in splicing its own and other chloroplast group II introns. The sequence is that of Maturase K from Huidobria chilensis (Loasa chilensis).